Reading from the N-terminus, the 417-residue chain is uncharacterized protein (417 aa).

The next 10 helical transmembrane spans lie at 21-41, 50-70, 88-108, 166-186, 217-237, 255-275, 283-303, 308-328, 351-371, and 373-393; these read ISSL…AFQL, LLMM…GLLA, LTVI…LLSV, SVFY…FFLP, MPLL…LQIG, LAGW…AITG, LLYF…APFL, IAGI…FGLV, AIQS…GVLA, and WIGV…IGLI.

The protein belongs to the major facilitator superfamily. TCR/Tet family.

The protein localises to the cell membrane. This is an uncharacterized protein from Bacillus subtilis (strain 168).